A 506-amino-acid polypeptide reads, in one-letter code: Plant intracellular Ras-group-related LRR protein 1 (506 aa).

The segment at 24 to 48 (TAKSSSSSDVEPPPSKSDPSSSSNH) is disordered. Residues 143 to 193 (KSILKLNELHESYEKLLKEAEERLVRIYESAEKNAAAVAEEEAAEVEVNEE) adopt a coiled-coil conformation. LRR repeat units follow at residues 203 to 225 (ENPL…AFGK), 226 to 249 (IQGL…IAGL), 251 to 272 (NLLE…IGLL), 273 to 295 (SKLK…ICHC), 297 to 319 (SLVV…GFEL), 320 to 342 (VKLE…IGEM), 344 to 364 (SLRY…SFGL), 365 to 389 (LTNL…SFGD), 390 to 412 (LISL…AFGT), and 414 to 436 (VNLT…VVKQ). Residues 437-449 (GVDAVKMYMGKRW) carry the GVYW motif.

The protein belongs to the SHOC2 family. Widely expressed.

Functionally, leucine-rich repeat protein that likely mediates protein interactions, possibly in the context of signal transduction. PIRL1 acts redundantly with PIRL9 in the differentiation of microspores into pollen. The sequence is that of Plant intracellular Ras-group-related LRR protein 1 (PIRL1) from Arabidopsis thaliana (Mouse-ear cress).